The primary structure comprises 319 residues: Glutathione synthetase (319 aa).

In terms of domain architecture, ATP-grasp spans 125–311 (KLFTAWFPEL…ITGMLMDAIE (187 aa)). 151-207 (HQEHGDIILKPLDGMGGTSIFRVKQDDPNLSVIIETLTELSSRFCMAQNFLPAIKEG) serves as a coordination point for ATP. Residues Glu-281 and Asn-283 each contribute to the Mg(2+) site.

The protein belongs to the prokaryotic GSH synthase family. Requires Mg(2+) as cofactor. The cofactor is Mn(2+).

It carries out the reaction gamma-L-glutamyl-L-cysteine + glycine + ATP = glutathione + ADP + phosphate + H(+). The protein operates within sulfur metabolism; glutathione biosynthesis; glutathione from L-cysteine and L-glutamate: step 2/2. In Yersinia pestis, this protein is Glutathione synthetase.